Here is a 293-residue protein sequence, read N- to C-terminus: Sphingolipid C4-hydroxylase sur2 (293 aa).

3 consecutive transmembrane segments (helical) span residues 18-38 (LVSP…LHYI), 68-88 (AVLF…MFEG), and 127-147 (FIVP…WQYF). The region spanning 136 to 270 (FAFFIIDSWQ…FTFWDHVLGT (135 aa)) is the Fatty acid hydroxylase domain.

Belongs to the sterol desaturase family.

It localises to the endoplasmic reticulum membrane. Its pathway is membrane lipid metabolism; sphingolipid biosynthesis. Its function is as follows. Required for hydroxylation of C-4 in the sphingoid moiety of ceramide. Involved in the response to syringomycin. This is Sphingolipid C4-hydroxylase sur2 (sur2) from Schizosaccharomyces pombe (strain 972 / ATCC 24843) (Fission yeast).